Consider the following 173-residue polypeptide: T cell receptor gamma constant 1 (173 aa).

An Ig-like domain is found at 10-104 (PKPTIFLPSI…NKNGVDQEII (95 aa)). A disulfide bridge connects residues C32 and C88. N-linked (GlcNAc...) asparagine glycosylation is found at N66, N120, N126, and N135. The chain crosses the membrane as a helical span at residues 139-161 (YYMYLLLLLKSVVYFAIITCCLL).

Gamma-delta TR is a heterodimer composed of a gamma and delta chain; disulfide-linked. The gamma-delta TR is associated with the transmembrane signaling CD3 coreceptor proteins following the stoichiometry: a single gamma-delta TR heterodimer associates with one CD3D-CD3E heterodimer, one CD3G-CD3E heterodimer and one CD247 homodimer forming a stable octameric structure. Upon activation, gamma-delta TR complex associates with FCER1G to initiate intracellular signaling.

Its subcellular location is the cell membrane. Constant region of T cell receptor (TR) gamma chain that participates in the antigen recognition. Gamma-delta TRs recognize a variety of self and foreign non-peptide antigens frequently expressed at the epithelial boundaries between the host and external environment, including endogenous lipids presented by MH-like protein CD1D and phosphoantigens presented by butyrophilin-like molecule BTN3A1. Upon antigen recognition induces rapid, innate-like immune responses involved in pathogen clearance and tissue repair. Binding of gamma-delta TR complex to antigen triggers phosphorylation of immunoreceptor tyrosine-based activation motifs (ITAMs) in the CD3 chains by the LCK and FYN kinases, allowing the recruitment, phosphorylation, and activation of ZAP70 that facilitates phosphorylation of the scaffolding proteins LCP2 and LAT. This lead to the formation of a supramolecular signalosome that recruits the phospholipase PLCG1, resulting in calcium mobilization and ERK activation, ultimately leading to T cell expansion and differentiation into effector cells. Gamma-delta TRs are produced through somatic rearrangement of a limited repertoire of variable (V), diversity (D), and joining (J) genes. The potential diversity of gamma-delta TRs is conferred by the unique ability to rearrange (D) genes in tandem and to utilize all three reading frames. The combinatorial diversity is considerably increased by the sequence exonuclease trimming and random nucleotide (N) region additions which occur during the V-(D)-J rearrangements. This Homo sapiens (Human) protein is T cell receptor gamma constant 1.